Reading from the N-terminus, the 389-residue chain is Glutamate 5-kinase (389 aa).

Lys-16 serves as a coordination point for ATP. Residues Ser-56, Asp-143, and Asn-155 each contribute to the substrate site. 175-176 (SD) lines the ATP pocket. One can recognise a PUA domain in the interval 281–358 (AGELHVDEGA…AEIEAILGYA (78 aa)).

It belongs to the glutamate 5-kinase family.

It localises to the cytoplasm. It carries out the reaction L-glutamate + ATP = L-glutamyl 5-phosphate + ADP. It participates in amino-acid biosynthesis; L-proline biosynthesis; L-glutamate 5-semialdehyde from L-glutamate: step 1/2. Its function is as follows. Catalyzes the transfer of a phosphate group to glutamate to form L-glutamate 5-phosphate. This Rhizobium etli (strain ATCC 51251 / DSM 11541 / JCM 21823 / NBRC 15573 / CFN 42) protein is Glutamate 5-kinase.